The sequence spans 282 residues: Probable endonuclease 4 (282 aa).

Zn(2+) contacts are provided by H69, H109, E145, D179, H182, H216, D229, H231, and E261.

This sequence belongs to the AP endonuclease 2 family. Zn(2+) is required as a cofactor.

The catalysed reaction is Endonucleolytic cleavage to 5'-phosphooligonucleotide end-products.. Functionally, endonuclease IV plays a role in DNA repair. It cleaves phosphodiester bonds at apurinic or apyrimidinic (AP) sites, generating a 3'-hydroxyl group and a 5'-terminal sugar phosphate. The polypeptide is Probable endonuclease 4 (Campylobacter fetus subsp. fetus (strain 82-40)).